The primary structure comprises 353 residues: Probable arabinan endo-1,5-alpha-L-arabinosidase B (353 aa).

A signal peptide spans 1–16 (MVLVATLFSLFTVSLC). Aspartate 39 acts as the Proton acceptor in catalysis. N-linked (GlcNAc...) asparagine glycosylation occurs at asparagine 194. The interval 202–227 (HLAKHPKTERVNSQDQNPDPLCRDSS) is disordered. Residue glutamate 233 is the Proton donor of the active site.

This sequence belongs to the glycosyl hydrolase 43 family.

Its subcellular location is the secreted. The enzyme catalyses Endohydrolysis of (1-&gt;5)-alpha-arabinofuranosidic linkages in (1-&gt;5)-arabinans.. It functions in the pathway glycan metabolism; L-arabinan degradation. Endo-1,5-alpha-L-arabinanase involved in degradation of pectin. Its preferred substrate is linear 1,5-alpha-L-arabinan. The chain is Probable arabinan endo-1,5-alpha-L-arabinosidase B (abnB) from Aspergillus oryzae (strain ATCC 42149 / RIB 40) (Yellow koji mold).